Reading from the N-terminus, the 310-residue chain is Fatty acid elongase 1 (310 aa).

The Lumenal segment spans residues 1 to 63 (MVSDWKNFCL…VGKQPLSEPR (63 aa)). A helical membrane pass occupies residues 64-84 (PVLLFIAMYYVVIFGGRSLVK). Topologically, residues 85–100 (SCKPLKLRFISQVHNL) are cytoplasmic. The chain crosses the membrane as a helical span at residues 101 to 121 (MLTSVSFLWLILMVEQMLPIV). Topologically, residues 122 to 141 (YRHGLYFAVCNVESWTQPME) are lumenal. A helical transmembrane segment spans residues 142-163 (TLYYLNYMTKFVEFADTVLMVL). Residues 164-174 (KHRKLTFLHTY) are Cytoplasmic-facing. Residues 172–176 (HTYHH) carry the HxxHH motif motif. Residues 175–196 (HHGATALLCYNQLVGYTAVTWV) traverse the membrane as a helical segment. At 197–201 (PVTLN) the chain is on the lumenal side. Residues 202 to 223 (LAVHVLMYWYYFLSASGIRVWW) form a helical membrane-spanning segment. Over 224-234 (KAWVTRLQIVQ) the chain is Cytoplasmic. The chain crosses the membrane as a helical span at residues 235 to 255 (FMLDLIVVYYVLYQKIVAAYF). The Lumenal portion of the chain corresponds to 256–271 (KNACTPQCEDCLGSMT). A helical transmembrane segment spans residues 272-292 (AIAAGAAILTSYLFLFISFYI). Topologically, residues 293-310 (EVYKRGSASGKKKINKNN) are cytoplasmic. The short motif at 304–307 (KKIN) is the Di-lysine motif element.

It belongs to the ELO family.

The protein localises to the endoplasmic reticulum membrane. It catalyses the reaction a very-long-chain acyl-CoA + malonyl-CoA + H(+) = a very-long-chain 3-oxoacyl-CoA + CO2 + CoA. It carries out the reaction tetradecanoyl-CoA + malonyl-CoA + H(+) = 3-oxohexadecanoyl-CoA + CO2 + CoA. The catalysed reaction is (9Z)-tetradecenoyl-CoA + malonyl-CoA + H(+) = 3-oxo-(11Z)-hexadecenoyl-CoA + CO2 + CoA. Component of a microsomal membrane bound medium-chain fatty acid elongation system, which extends medium-chain-length fatty acids to long-chain fatty acids. Component of elongase I, which extends 12-16-carbon fatty acyl-CoAs such as lauroyl-CoA to 14-18-carbon fatty acids by incorporation of malonyl-CoA. The sequence is that of Fatty acid elongase 1 from Saccharomyces cerevisiae (strain ATCC 204508 / S288c) (Baker's yeast).